A 314-amino-acid chain; its full sequence is Putative S-adenosyl-L-methionine-dependent methyltransferase MAP_4191c (314 aa).

S-adenosyl-L-methionine contacts are provided by residues D138 and D167–L168.

The protein belongs to the UPF0677 family.

Its function is as follows. Exhibits S-adenosyl-L-methionine-dependent methyltransferase activity. The protein is Putative S-adenosyl-L-methionine-dependent methyltransferase MAP_4191c of Mycolicibacterium paratuberculosis (strain ATCC BAA-968 / K-10) (Mycobacterium paratuberculosis).